Consider the following 396-residue polypeptide: Phosphoglycerate kinase (396 aa).

Residues 22-24 (DLN), Arg-37, 60-63 (HFGR), Arg-118, and Arg-151 each bind substrate. ATP-binding positions include Lys-201, Glu-323, and 353–356 (GGDT).

This sequence belongs to the phosphoglycerate kinase family. In terms of assembly, monomer.

It is found in the cytoplasm. The enzyme catalyses (2R)-3-phosphoglycerate + ATP = (2R)-3-phospho-glyceroyl phosphate + ADP. Its pathway is carbohydrate degradation; glycolysis; pyruvate from D-glyceraldehyde 3-phosphate: step 2/5. The sequence is that of Phosphoglycerate kinase from Azorhizobium caulinodans (strain ATCC 43989 / DSM 5975 / JCM 20966 / LMG 6465 / NBRC 14845 / NCIMB 13405 / ORS 571).